A 453-amino-acid chain; its full sequence is GTPase Der (453 aa).

EngA-type G domains are found at residues 4-169 and 177-352; these read PIVA…PPTT and IKIA…EEHK. GTP is bound by residues 10–17, 57–61, 120–123, 183–190, 230–234, and 295–298; these read GRPNVGKS, DTGGL, NKCE, DTAGI, and NKWD. The 86-residue stretch at 353–438 folds into the KH-like domain; that stretch reads RRVSTSVINE…PIRLLWRSKK (86 aa).

The protein belongs to the TRAFAC class TrmE-Era-EngA-EngB-Septin-like GTPase superfamily. EngA (Der) GTPase family. As to quaternary structure, associates with the 50S ribosomal subunit.

Functionally, GTPase that plays an essential role in the late steps of ribosome biogenesis. This chain is GTPase Der, found in Trichormus variabilis (strain ATCC 29413 / PCC 7937) (Anabaena variabilis).